The sequence spans 480 residues: Putative auxin transporter-like protein 4 (480 aa).

The Cytoplasmic portion of the chain corresponds to 1–66 (MASEKVETIV…DAWFSCASNQ (66 aa)). A helical membrane pass occupies residues 67–84 (VAQVLLTLPYSFSQLGMA). Topologically, residues 85 to 86 (SG) are extracellular. The chain crosses the membrane as a helical span at residues 87-107 (VAFQVFYGLMGSWTAYLISVL). Over 108-143 (YVEYRTRRERDKVDFRNHVIQWFEVLDGLLGRHWRN) the chain is Cytoplasmic. Residues 144 to 164 (AGLLFNCTFLLFGSVIQLIAC) form a helical membrane-spanning segment. Topologically, residues 165 to 179 (ASNIYYINDRLDKRT) are extracellular. A helical membrane pass occupies residues 180 to 200 (WTYIFGACCATTVFVPSFHNY). At 201–203 (RVW) the chain is on the cytoplasmic side. The chain crosses the membrane as a helical span at residues 204–224 (SFLGLLMTSYTAWYLTVAAVV). At 225–241 (HGKVDGAAPRAGPSKTM) the chain is on the extracellular side. A helical membrane pass occupies residues 242-262 (VLYFTGATNILYTFGGHAVTV). The Cytoplasmic portion of the chain corresponds to 263-275 (EIMHAMWRPRRFK). Residues 276 to 296 (MIYLAATAYVLTLTLPSAAAM) traverse the membrane as a helical segment. The Extracellular segment spans residues 297 to 323 (YWAFGDALLDHSNAFALLPRTPWRDAA). A helical transmembrane segment spans residues 324–344 (VVLMLIHQFITFGFACTPLYF). The Cytoplasmic segment spans residues 345-365 (VWEKAIGVHGGAGVLRRAAAR). A helical transmembrane segment spans residues 366–386 (LPVVLPIWFLAVIFPFFGPIN). A topological domain (extracellular) is located at residue serine 387. The chain crosses the membrane as a helical span at residues 388 to 408 (TVGSFLVSFTVYIIPAMAHMA). Topologically, residues 409-433 (TFAPAAARENAVEPPPRALGGWPGT) are cytoplasmic. Residues 434-454 (FAANCFVVAWVLVVGFGFGGW) traverse the membrane as a helical segment. Residues 455–480 (ASTVNFVRQVDTFGLFTKCYQCPPRH) are Extracellular-facing.

This sequence belongs to the amino acid/polyamine transporter 2 family. Amino acid/auxin permease (AAAP) (TC 2.A.18.1) subfamily.

It localises to the cell membrane. Its function is as follows. Carrier protein involved in proton-driven auxin influx. May mediate the formation of auxin gradient from developing leaves (site of auxin biosynthesis) to tips. In Oryza sativa subsp. japonica (Rice), this protein is Putative auxin transporter-like protein 4.